A 495-amino-acid chain; its full sequence is Aspartyl/glutamyl-tRNA(Asn/Gln) amidotransferase subunit B (495 aa).

Belongs to the GatB/GatE family. GatB subfamily. As to quaternary structure, heterotrimer of A, B and C subunits.

The catalysed reaction is L-glutamyl-tRNA(Gln) + L-glutamine + ATP + H2O = L-glutaminyl-tRNA(Gln) + L-glutamate + ADP + phosphate + H(+). The enzyme catalyses L-aspartyl-tRNA(Asn) + L-glutamine + ATP + H2O = L-asparaginyl-tRNA(Asn) + L-glutamate + ADP + phosphate + 2 H(+). In terms of biological role, allows the formation of correctly charged Asn-tRNA(Asn) or Gln-tRNA(Gln) through the transamidation of misacylated Asp-tRNA(Asn) or Glu-tRNA(Gln) in organisms which lack either or both of asparaginyl-tRNA or glutaminyl-tRNA synthetases. The reaction takes place in the presence of glutamine and ATP through an activated phospho-Asp-tRNA(Asn) or phospho-Glu-tRNA(Gln). In Methanosarcina barkeri (strain Fusaro / DSM 804), this protein is Aspartyl/glutamyl-tRNA(Asn/Gln) amidotransferase subunit B.